The primary structure comprises 82 residues: Large ribosomal subunit protein bL31B (82 aa).

Belongs to the bacterial ribosomal protein bL31 family. Type B subfamily. Part of the 50S ribosomal subunit.

The polypeptide is Large ribosomal subunit protein bL31B (Bacillus velezensis (strain DSM 23117 / BGSC 10A6 / LMG 26770 / FZB42) (Bacillus amyloliquefaciens subsp. plantarum)).